The sequence spans 258 residues: Tryptophan synthase alpha chain (258 aa).

Catalysis depends on proton acceptor residues Glu-52 and Asp-63.

This sequence belongs to the TrpA family. Tetramer of two alpha and two beta chains.

The enzyme catalyses (1S,2R)-1-C-(indol-3-yl)glycerol 3-phosphate + L-serine = D-glyceraldehyde 3-phosphate + L-tryptophan + H2O. The protein operates within amino-acid biosynthesis; L-tryptophan biosynthesis; L-tryptophan from chorismate: step 5/5. In terms of biological role, the alpha subunit is responsible for the aldol cleavage of indoleglycerol phosphate to indole and glyceraldehyde 3-phosphate. The chain is Tryptophan synthase alpha chain from Streptococcus pneumoniae (strain P1031).